We begin with the raw amino-acid sequence, 248 residues long: Probable transcriptional regulatory protein RHECIAT_CH0003714 (248 aa).

Belongs to the TACO1 family.

The protein localises to the cytoplasm. The protein is Probable transcriptional regulatory protein RHECIAT_CH0003714 of Rhizobium etli (strain CIAT 652).